Consider the following 381-residue polypeptide: Transaldolase 2 (381 aa).

The active-site Schiff-base intermediate with substrate is the Lys-141.

This sequence belongs to the transaldolase family. Type 2 subfamily.

The protein localises to the cytoplasm. The enzyme catalyses D-sedoheptulose 7-phosphate + D-glyceraldehyde 3-phosphate = D-erythrose 4-phosphate + beta-D-fructose 6-phosphate. The protein operates within carbohydrate degradation; pentose phosphate pathway; D-glyceraldehyde 3-phosphate and beta-D-fructose 6-phosphate from D-ribose 5-phosphate and D-xylulose 5-phosphate (non-oxidative stage): step 2/3. In terms of biological role, transaldolase is important for the balance of metabolites in the pentose-phosphate pathway. This Nostoc sp. (strain PCC 7120 / SAG 25.82 / UTEX 2576) protein is Transaldolase 2 (tal2).